The primary structure comprises 468 residues: Ubiquinone biosynthesis monooxygenase COQ6, mitochondrial (468 aa).

A mitochondrion-targeting transit peptide spans 1 to 28 (MAARLVSRCGAVRAAPHSGPLVSWRRWS).

It belongs to the UbiH/COQ6 family. As to quaternary structure, component of a multi-subunit COQ enzyme complex, composed of at least COQ3, COQ4, COQ5, COQ6, COQ7 and COQ9. Interacts with COQ8B and COQ7. The cofactor is FAD. As to expression, widely expressed.

Its subcellular location is the mitochondrion inner membrane. The protein resides in the golgi apparatus. The protein localises to the cell projection. The enzyme catalyses 4-hydroxy-3-(all-trans-decaprenyl)benzoate + 2 reduced [2Fe-2S]-[ferredoxin] + O2 + 2 H(+) = 3,4-dihydroxy-5-(all-trans-decaprenyl)benzoate + 2 oxidized [2Fe-2S]-[ferredoxin] + H2O. The catalysed reaction is 2-methoxy-6-(all-trans-decaprenyl)phenol + 2 reduced [2Fe-2S]-[ferredoxin] + O2 + 2 H(+) = 2-methoxy-6-(all-trans-decaprenyl)benzene-1,4-diol + 2 oxidized [2Fe-2S]-[ferredoxin] + H2O. It participates in cofactor biosynthesis; ubiquinone biosynthesis. FAD-dependent monooxygenase required for two non-consecutive steps during ubiquinone biosynthesis. Required for the C5-ring hydroxylation during ubiquinone biosynthesis by catalyzing the hydroxylation of 4-hydroxy-3-(all-trans-decaprenyl)benzoic acid to 3,4-dihydroxy-5-(all-trans-decaprenyl)benzoic acid. Also acts downstream of COQ4, for the C1-hydroxylation during ubiquinone biosynthesis by catalyzing the hydroxylation of 2-methoxy-6-(all-trans-decaprenyl)phenol to 2-methoxy-6-(all-trans-decaprenyl)benzene-1,4-diol. The electrons required for the hydroxylation reaction are funneled indirectly to COQ6 from NADPH via a ferredoxin/ferredoxin reductase system composed of FDX2 and FDXR. The sequence is that of Ubiquinone biosynthesis monooxygenase COQ6, mitochondrial from Homo sapiens (Human).